The chain runs to 383 residues: ATP phosphoribosyltransferase regulatory subunit (383 aa).

It belongs to the class-II aminoacyl-tRNA synthetase family. HisZ subfamily. In terms of assembly, heteromultimer composed of HisG and HisZ subunits.

It is found in the cytoplasm. It functions in the pathway amino-acid biosynthesis; L-histidine biosynthesis; L-histidine from 5-phospho-alpha-D-ribose 1-diphosphate: step 1/9. Its function is as follows. Required for the first step of histidine biosynthesis. May allow the feedback regulation of ATP phosphoribosyltransferase activity by histidine. In Cupriavidus taiwanensis (strain DSM 17343 / BCRC 17206 / CCUG 44338 / CIP 107171 / LMG 19424 / R1) (Ralstonia taiwanensis (strain LMG 19424)), this protein is ATP phosphoribosyltransferase regulatory subunit.